A 146-amino-acid polypeptide reads, in one-letter code: Superoxide dismutase [Mn] 2 (146 aa).

Mn(2+) is bound by residues His42, Asp126, and His130.

It belongs to the iron/manganese superoxide dismutase family. It depends on Mn(2+) as a cofactor.

It catalyses the reaction 2 superoxide + 2 H(+) = H2O2 + O2. Its function is as follows. Destroys superoxide anion radicals which are normally produced within the cells and which are toxic to biological systems. The sequence is that of Superoxide dismutase [Mn] 2 (sod2) from Haloferax mediterranei (Halobacterium mediterranei).